We begin with the raw amino-acid sequence, 427 residues long: Serine--tRNA ligase (427 aa).

Position 231-233 (231-233 (TAE)) interacts with L-serine. An ATP-binding site is contributed by 262 to 264 (RSE). Glu285 provides a ligand contact to L-serine. 349-352 (EISS) lines the ATP pocket. Ser385 lines the L-serine pocket.

Belongs to the class-II aminoacyl-tRNA synthetase family. Type-1 seryl-tRNA synthetase subfamily. Homodimer. The tRNA molecule binds across the dimer.

Its subcellular location is the cytoplasm. It catalyses the reaction tRNA(Ser) + L-serine + ATP = L-seryl-tRNA(Ser) + AMP + diphosphate + H(+). The catalysed reaction is tRNA(Sec) + L-serine + ATP = L-seryl-tRNA(Sec) + AMP + diphosphate + H(+). It functions in the pathway aminoacyl-tRNA biosynthesis; selenocysteinyl-tRNA(Sec) biosynthesis; L-seryl-tRNA(Sec) from L-serine and tRNA(Sec): step 1/1. In terms of biological role, catalyzes the attachment of serine to tRNA(Ser). Is also able to aminoacylate tRNA(Sec) with serine, to form the misacylated tRNA L-seryl-tRNA(Sec), which will be further converted into selenocysteinyl-tRNA(Sec). The protein is Serine--tRNA ligase of Brucella canis (strain ATCC 23365 / NCTC 10854 / RM-666).